A 579-amino-acid chain; its full sequence is Thiol:disulfide interchange protein DsbD (579 aa).

An N-terminal signal peptide occupies residues 1-16; sequence MKKLFLFFTLIFTAFA. Disulfide bonds link C124–C129 and C193–C315. 8 helical membrane passes run 178-198, 230-250, 254-274, 296-316, 337-357, 376-396, 397-417, and 420-440; these read IFGFFLLGLGLAFTPCVLPML, LTYTLLGLAVAAIGLPFQIAL, YVMIGLSILFVVLALSMFGLF, GAFGGAFAMGMIAGLVASPCT, AATLYLLALGMGVPLMLITLF, FGFVMLALPVFLLSRILPEVW, EPRLWAGLATVFFIWFALQMS, and GFGYAIKIISFVLAMVTVQPL. Residues 449–579 form the Thioredoxin domain; the sequence is TTTQSAVENK…AFSNWLKALH (131 aa). C495 and C498 are joined by a disulfide.

The protein belongs to the thioredoxin family. DsbD subfamily.

It localises to the cell inner membrane. It catalyses the reaction [protein]-dithiol + NAD(+) = [protein]-disulfide + NADH + H(+). The enzyme catalyses [protein]-dithiol + NADP(+) = [protein]-disulfide + NADPH + H(+). In terms of biological role, required to facilitate the formation of correct disulfide bonds in some periplasmic proteins and for the assembly of the periplasmic c-type cytochromes. Acts by transferring electrons from cytoplasmic thioredoxin to the periplasm. This transfer involves a cascade of disulfide bond formation and reduction steps. This Haemophilus influenzae (strain PittEE) protein is Thiol:disulfide interchange protein DsbD.